The following is a 277-amino-acid chain: Shikimate dehydrogenase (NADP(+)) (277 aa).

Residues 15-17 and Thr-62 contribute to the shikimate site; that span reads SLS. Lys-66 acts as the Proton acceptor in catalysis. Residues Asn-87 and Asp-102 each contribute to the shikimate site. Residues 127 to 131, 151 to 156, and Ile-219 contribute to the NADP(+) site; these read GAGGA and NRTVSK. Tyr-221 lines the shikimate pocket. Gly-242 contacts NADP(+).

This sequence belongs to the shikimate dehydrogenase family. In terms of assembly, homodimer.

It carries out the reaction shikimate + NADP(+) = 3-dehydroshikimate + NADPH + H(+). It participates in metabolic intermediate biosynthesis; chorismate biosynthesis; chorismate from D-erythrose 4-phosphate and phosphoenolpyruvate: step 4/7. In terms of biological role, involved in the biosynthesis of the chorismate, which leads to the biosynthesis of aromatic amino acids. Catalyzes the reversible NADPH linked reduction of 3-dehydroshikimate (DHSA) to yield shikimate (SA). This chain is Shikimate dehydrogenase (NADP(+)), found in Geobacillus sp. (strain WCH70).